Reading from the N-terminus, the 566-residue chain is Acyl-CoA synthetase ALT10 (566 aa).

196–207 (MLFTSGTTGAPK) serves as a coordination point for AMP. An AMP-binding region spans residues 473–551 (EVEHAALSHE…DAVHYNRTGK (79 aa)).

The protein belongs to the ATP-dependent AMP-binding enzyme family.

It participates in mycotoxin biosynthesis. Functionally, acyl-CoA synthetase; part of the gene cluster that mediates the biosynthesis of the host-selective toxins (HSTs) AAL-toxins, sphinganine-analog mycotoxins responsible for Alternaria stem canker on tomato by the tomato pathotype. The biosynthesis starts with the polyketide synthase ALT1-catalyzed C-16 carbon chain assembly from one starter acetyl-CoA unit with malonyl-CoA extender units. ALT1 also selectively transfers methyl groups at the first and the third cycle of chain elongation for AAL toxin. The C-16 polyketide chain is released from the enzyme by a nucleophilic attack of a carbanion, which is derived from R-carbon of glycin by decarboxylation, on the carbonyl carbon of polyketide acyl chain. This step is probably catalyzed by a pyridoxal 5'-phosphate-dependent aminoacyl transferase ALT4. The respective functions of the other enzymes encoded by the cluster have still to be elucidated. The sphingosine N-acyltransferase-like protein ALT7 seems not to act as a resistance/self-tolerance factor against the toxin in the toxin biosynthetic gene cluster, contrary to what is expected. This is Acyl-CoA synthetase ALT10 from Alternaria alternata (Alternaria rot fungus).